The chain runs to 110 residues: Eukaryotic translation initiation factor eIF1 (110 aa).

The protein belongs to the SUI1 family.

In terms of biological role, probably involved in translation. The sequence is that of Eukaryotic translation initiation factor eIF1 from Anopheles gambiae (African malaria mosquito).